The primary structure comprises 209 residues: GTP-binding protein RHO1 (209 aa).

At Ser-2 the chain carries N-acetylserine. Residue 17 to 24 (GDGACGKT) participates in GTP binding. The Effector region motif lies at 39–47 (YVPTVFENY). Residues 64 to 68 (DTAGQ) and 122 to 125 (CKVD) contribute to the GTP site. A disordered region spans residues 187–209 (KSKTNGKAKKNTTEKKKKKCVLL). The segment covering 190-209 (TNGKAKKNTTEKKKKKCVLL) has biased composition (basic residues). Position 206 is a cysteine methyl ester (Cys-206). Residue Cys-206 is the site of S-geranylgeranyl cysteine attachment. Positions 207–209 (VLL) are cleaved as a propeptide — removed in mature form.

It belongs to the small GTPase superfamily. Rho family. Interacts with BEM4; the interaction is direct. Interacts with SEC3; the interaction is direct. Interacts with the GAP BAG7. Interacts with the GAP LRG1. Interacts with the GAP SAC7. Interacts with the GAP RDI1. Interacts with the 1,3-beta-glucan synthase component FKS1. Interacts with the protein kinase PKC1. Interacts with the G protein beta subunit STE4. Interacts with SKN7. Interacts with TUS1. Interacts with BNI1.

Its subcellular location is the cell membrane. It localises to the endosome membrane. The protein localises to the peroxisome membrane. It catalyses the reaction GTP + H2O = GDP + phosphate + H(+). Alternates between an inactive form bound to GDP and an active form bound to GTP. Activated by the guanine nucleotide-exchange factors (GEFs) ROM1, ROM2 and TUS1, and inactivated by GTPase-activating proteins (GAPs) BAG7, BEM2, LRG1, and SAC7, and the Rho GDP-dissociation inhibitor RDI1. The different GAPs regulate RHO1 in a target-specific manner. Acts as a central regulator in the cell wall integrity signaling pathway, which is regulated by the cell cycle and in response to various types of cell wall stress. Integrates signals from different cell surface sensors, and activates a set of effectors, regulating processes including beta-glucan synthesis at the site of wall remodeling, gene expression related to cell wall biogenesis, organization of the actin cytoskeleton, and protein- and secretory vesicle-targeting to the growth site. Activates the protein kinase C (PKC1) MAP kinase cascade, the beta-1,3-glucan synthase (FKS1), the formin BNI1, the exocyst component SEC3 and the transcription factor SKN7. This chain is GTP-binding protein RHO1 (RHO1), found in Saccharomyces cerevisiae (strain ATCC 204508 / S288c) (Baker's yeast).